Here is a 544-residue protein sequence, read N- to C-terminus: Probable protein kinase UbiB (544 aa).

Positions 123–501 constitute a Protein kinase domain; it reads DFDLVPLASA…KRQQATGKFL (379 aa). Residues 129–137 and K152 contribute to the ATP site; that span reads LASASIAQV. Residue D287 is the Proton acceptor of the active site. 2 helical membrane passes run 496-516 and 519-539; these read ATGK…AILV and TYEQ…LFSW.

It belongs to the ABC1 family. UbiB subfamily.

The protein resides in the cell inner membrane. It participates in cofactor biosynthesis; ubiquinone biosynthesis [regulation]. Its function is as follows. Is probably a protein kinase regulator of UbiI activity which is involved in aerobic coenzyme Q (ubiquinone) biosynthesis. The protein is Probable protein kinase UbiB of Vibrio vulnificus (strain YJ016).